An 861-amino-acid chain; its full sequence is Nuclear cap-binding protein complex subunit 1 (861 aa).

Residues Arg-22–Pro-30 carry the Nuclear localization signal motif. Positions Cys-36 to Lys-264 constitute an MIF4G domain.

This sequence belongs to the NCBP1 family. Component of the nuclear cap-binding complex (CBC), a heterodimer composed of STO1/CBC1 and CBC2 that interacts with capped RNAs. The complex interacts strongly with the importin subunit alpha SRP1. The SRP1-CBC trimer also binds to capped RNAs, but formation of the importin alpha/beta heterodimer upon binding of KAP95 to SRP1 in the cytoplasm causes dissociation of CBC from the RNA. The CBC complex is part of the commitment complex 1 (CC1), binding to the cap of pre-mRNA and interacting with U1 snRNP subunits MUD2 and SNU56. The CBC complex is part of the NRD1 complex, composed of CBC2, NAB1, NRD1, SEN1 and STO1/CBC2. The CBC complex also interacts with NPL3 and eIF4G (TIF4631 and TIF4632).

Its subcellular location is the nucleus. It localises to the cytoplasm. It is found in the perinuclear region. Functionally, component of the CBC complex, which binds co-transcriptionally to the 5'-cap of pre-mRNAs and is involved in maturation, export and degradation of nuclear mRNAs. The CBC complex is required for efficient pre-mRNA splicing through efficient commitment complex and spliceosome formation. Together with NPL3, the CBC complex is required for export of mRNAs out of the nucleus. The CBC complex is also involved in nuclear mRNA degradation, probably by directing the mRNAs to the sites of degradation. Affects replication of the positive-strand RNA virus BMV. The chain is Nuclear cap-binding protein complex subunit 1 (STO1) from Saccharomyces cerevisiae (strain ATCC 204508 / S288c) (Baker's yeast).